We begin with the raw amino-acid sequence, 257 residues long: Diphthine synthase (257 aa).

S-adenosyl-L-methionine-binding positions include Ile-11, Asp-89, Ile-92, 117–118, Leu-169, Leu-210, and His-235; that span reads SV.

Belongs to the diphthine synthase family. As to quaternary structure, homodimer.

It catalyses the reaction 2-[(3S)-amino-3-carboxypropyl]-L-histidyl-[translation elongation factor 2] + 3 S-adenosyl-L-methionine = diphthine-[translation elongation factor 2] + 3 S-adenosyl-L-homocysteine + 3 H(+). The protein operates within protein modification; peptidyl-diphthamide biosynthesis. Its function is as follows. S-adenosyl-L-methionine-dependent methyltransferase that catalyzes the trimethylation of the amino group of the modified target histidine residue in translation elongation factor 2 (EF-2), to form an intermediate called diphthine. The three successive methylation reactions represent the second step of diphthamide biosynthesis. This is Diphthine synthase from Saccharolobus solfataricus (strain ATCC 35092 / DSM 1617 / JCM 11322 / P2) (Sulfolobus solfataricus).